The primary structure comprises 190 residues: MQSLMQAPVLIALGLLFAAPAQAHLKKLGSFSWDNCDEGKDPAVIRSLTLEPDPILIPGNVTVSVVGSTSVLLSSPLKVELVLEKEVAGLWIKIPCTDYIGSCTFEDFCDVLDMLIPTGEPCPEPLRTYGLPCHCPFKEGTYSLPKSEFVVPHLELPSWLTTGNYRIESILSNRGKRLGCIKIAASLKGV.

Positions 1-23 (MQSLMQAPVLIALGLLFAAPAQA) are cleaved as a signal peptide. 4 cysteine pairs are disulfide-bonded: Cys36-Cys180, Cys96-Cys103, Cys109-Cys135, and Cys122-Cys133. N-linked (GlcNAc...) asparagine glycosylation occurs at Asn60.

It localises to the lysosome. It carries out the reaction cholesterol(in) = cholesterol(out). Its function is as follows. The large binding pocket can accommodate several single chain phospholipids and fatty acids, GM2A also exhibits some calcium-independent phospholipase activity. Binds gangliosides and stimulates ganglioside GM2 degradation. It stimulates only the breakdown of ganglioside GM2 and glycolipid GA2 by beta-hexosaminidase A. It extracts single GM2 molecules from membranes and presents them in soluble form to beta-hexosaminidase A for cleavage of N-acetyl-D-galactosamine and conversion to GM3. Has cholesterol transfer activity. In Macaca fascicularis (Crab-eating macaque), this protein is Ganglioside GM2 activator (GM2A).